Reading from the N-terminus, the 381-residue chain is tRNA-specific 2-thiouridylase MnmA (381 aa).

ATP is bound by residues 26–33 and leucine 52; that span reads AMSGGVDS. The active-site Nucleophile is cysteine 120. A disulfide bridge links cysteine 120 with cysteine 217. Glycine 144 serves as a coordination point for ATP. Residues 166 to 168 form an interaction with tRNA region; that stretch reads RDQ. Catalysis depends on cysteine 217, which acts as the Cysteine persulfide intermediate.

Belongs to the MnmA/TRMU family.

It is found in the cytoplasm. The enzyme catalyses S-sulfanyl-L-cysteinyl-[protein] + uridine(34) in tRNA + AH2 + ATP = 2-thiouridine(34) in tRNA + L-cysteinyl-[protein] + A + AMP + diphosphate + H(+). Functionally, catalyzes the 2-thiolation of uridine at the wobble position (U34) of tRNA, leading to the formation of s(2)U34. The protein is tRNA-specific 2-thiouridylase MnmA of Ruegeria sp. (strain TM1040) (Silicibacter sp.).